A 129-amino-acid chain; its full sequence is Serum amyloid A-1 protein (129 aa).

An N-terminal signal peptide occupies residues 1 to 18 (MKLFTGLIFCSLVLGVSS). The tract at residues 19–44 (QWYSFIGEAAQGAWDMYRAYSDMIEA) is important for amyloid formation. Residues 92–129 (GDSGHGVEDSKADQAANEWGRSGKDPNHFRPPGLPDKY) form a disordered region.

It belongs to the SAA family. In terms of assembly, homohexamer; dimer of trimers. Can form amyloid fibrils after partial proteolysis; the native, undenatured protein does not form amyloid fibrils (in vitro). Apolipoprotein of the HDL complex. Binds to heparin. As to expression, detected in liver.

The protein localises to the secreted. Functionally, major acute phase protein. The polypeptide is Serum amyloid A-1 protein (SAA1) (Neovison vison (American mink)).